Here is a 284-residue protein sequence, read N- to C-terminus: Nucleotide-binding protein NMA0948 (284 aa).

8–15 contributes to the ATP binding site; that stretch reads GLSGSGKS. 58 to 61 is a binding site for GTP; that stretch reads DVRS.

This sequence belongs to the RapZ-like family.

In terms of biological role, displays ATPase and GTPase activities. This is Nucleotide-binding protein NMA0948 from Neisseria meningitidis serogroup A / serotype 4A (strain DSM 15465 / Z2491).